Reading from the N-terminus, the 173-residue chain is Small ribosomal subunit protein uS10m (173 aa).

It belongs to the universal ribosomal protein uS10 family. Component of the mitochondrial ribosome small subunit (28S) which comprises a 12S rRNA and about 30 distinct proteins.

The protein localises to the mitochondrion. This is Small ribosomal subunit protein uS10m (mRpS10) from Drosophila melanogaster (Fruit fly).